The following is a 284-amino-acid chain: L-ribulose-5-phosphate 3-epimerase UlaE (284 aa).

This sequence belongs to the L-ribulose-5-phosphate 3-epimerase family.

It carries out the reaction L-ribulose 5-phosphate = L-xylulose 5-phosphate. The protein operates within cofactor degradation; L-ascorbate degradation; D-xylulose 5-phosphate from L-ascorbate: step 3/4. In terms of biological role, catalyzes the isomerization of L-xylulose-5-phosphate to L-ribulose-5-phosphate. Is involved in the anaerobic L-ascorbate utilization. The chain is L-ribulose-5-phosphate 3-epimerase UlaE from Escherichia coli O45:K1 (strain S88 / ExPEC).